A 536-amino-acid polypeptide reads, in one-letter code: Chaperonin GroEL (536 aa).

Residues T29–P32, D86–T90, G413, D476–A478, and D492 contribute to the ATP site.

This sequence belongs to the chaperonin (HSP60) family. As to quaternary structure, forms a cylinder of 14 subunits composed of two heptameric rings stacked back-to-back. Interacts with the co-chaperonin GroES.

The protein resides in the cytoplasm. It carries out the reaction ATP + H2O + a folded polypeptide = ADP + phosphate + an unfolded polypeptide.. Functionally, together with its co-chaperonin GroES, plays an essential role in assisting protein folding. The GroEL-GroES system forms a nano-cage that allows encapsulation of the non-native substrate proteins and provides a physical environment optimized to promote and accelerate protein folding. This chain is Chaperonin GroEL, found in Methanococcus vannielii (strain ATCC 35089 / DSM 1224 / JCM 13029 / OCM 148 / SB).